The sequence spans 323 residues: Digestive cysteine proteinase 2 (323 aa).

The N-terminal stretch at 1–16 (MKVAVLFLCGVALAAA) is a signal peptide. The propeptide at 17 to 107 (SPSWEHFKGK…FYPKKETGPQ (91 aa)) is activation peptide. Disulfide bonds link cysteine 128-cysteine 171, cysteine 162-cysteine 204, and cysteine 263-cysteine 312. Cysteine 131 is a catalytic residue. Residues histidine 270 and asparagine 290 contribute to the active site.

This sequence belongs to the peptidase C1 family.

With respect to regulation, inhibited by E-64, antipain, leupeptin, heavy metal ions, iodoacetic acid, dithionitrobenzene, p-hydroxymercuri-benzoate; activated by mercaptoethanol and dithiothreitol. This chain is Digestive cysteine proteinase 2 (LCP2), found in Homarus americanus (American lobster).